A 181-amino-acid chain; its full sequence is MMKLKKVFIDIGSILRSIWMIGMQAFSKRETRMYPEVPYIPSPRYRGRIVLTRDSSGRERCVACNLCAVACPVGCISLKKGESTDGRWYPKFFRINFSRCIFCGMCEEACPTAAIQLTPDFEMSDFKRHDLVYEKSDLLISGPGKYLEYDFYQFSGKEILDKKKGDAIKESKPINVKNILP.

2 consecutive 4Fe-4S ferredoxin-type domains span residues 52 to 81 (TRDS…LKKG) and 91 to 120 (KFFR…LTPD). Residues cysteine 61, cysteine 64, cysteine 67, cysteine 71, cysteine 100, cysteine 103, cysteine 106, and cysteine 110 each contribute to the [4Fe-4S] cluster site.

Belongs to the complex I 23 kDa subunit family. In terms of assembly, NDH-1 is composed of 13 different subunits. Subunits NuoA, H, J, K, L, M, N constitute the membrane sector of the complex. The cofactor is [4Fe-4S] cluster.

The protein localises to the cell inner membrane. It carries out the reaction a quinone + NADH + 5 H(+)(in) = a quinol + NAD(+) + 4 H(+)(out). Its function is as follows. NDH-1 shuttles electrons from NADH, via FMN and iron-sulfur (Fe-S) centers, to quinones in the respiratory chain. The immediate electron acceptor for the enzyme in this species is believed to be ubiquinone. Couples the redox reaction to proton translocation (for every two electrons transferred, four hydrogen ions are translocated across the cytoplasmic membrane), and thus conserves the redox energy in a proton gradient. This is NADH-quinone oxidoreductase subunit I from Blochmanniella pennsylvanica (strain BPEN).